The following is a 680-amino-acid chain: DNA-directed RNA polymerase subunit beta' (680 aa).

Zn(2+) is bound by residues cysteine 69, cysteine 71, cysteine 87, and cysteine 90. Residues aspartate 489, aspartate 491, and aspartate 493 each coordinate Mg(2+).

The protein belongs to the RNA polymerase beta' chain family. RpoC1 subfamily. In plastids the minimal PEP RNA polymerase catalytic core is composed of four subunits: alpha, beta, beta', and beta''. When a (nuclear-encoded) sigma factor is associated with the core the holoenzyme is formed, which can initiate transcription. Mg(2+) is required as a cofactor. The cofactor is Zn(2+).

The protein resides in the plastid. Its subcellular location is the chloroplast. The catalysed reaction is RNA(n) + a ribonucleoside 5'-triphosphate = RNA(n+1) + diphosphate. In terms of biological role, DNA-dependent RNA polymerase catalyzes the transcription of DNA into RNA using the four ribonucleoside triphosphates as substrates. This Lepidium virginicum (Virginia pepperweed) protein is DNA-directed RNA polymerase subunit beta'.